The following is a 329-amino-acid chain: MQGSVTEFLKPRLVDIEQVSSTHAKVTLEPLERGFGHTLGNALRRILLSSMPGCAVTEVEIDGVLHEYSTKEGVQEDILEILLNLKGLAVRVQGKDEVILTLNKSGIGPVTAADITHDGDVEIVKPQHVICHLTDENASISMRIKVQRGRGYVPASTRIHSEEDERPIGRLLVDACYSPVERIAYNVEAARVEQRTDLDKLVIEMETNGTIDPEEAIRRAATILAEQLEAFVDLRDVRQPEVKEEKPEFDPILLRPVDDLELTVRSANCLKAEAIHYIGDLVQRTEVELLKTPNLGKKSLTEIKDVLASRGLSLGMRLENWPPASIADE.

An alpha N-terminal domain (alpha-NTD) region spans residues Met1–Arg235. The tract at residues Phe249–Glu329 is alpha C-terminal domain (alpha-CTD).

Belongs to the RNA polymerase alpha chain family. As to quaternary structure, homodimer. The RNAP catalytic core consists of 2 alpha, 1 beta, 1 beta' and 1 omega subunit. When a sigma factor is associated with the core the holoenzyme is formed, which can initiate transcription.

The enzyme catalyses RNA(n) + a ribonucleoside 5'-triphosphate = RNA(n+1) + diphosphate. Functionally, DNA-dependent RNA polymerase catalyzes the transcription of DNA into RNA using the four ribonucleoside triphosphates as substrates. This Shigella flexneri serotype 5b (strain 8401) protein is DNA-directed RNA polymerase subunit alpha.